A 352-amino-acid chain; its full sequence is N-acetyl-gamma-glutamyl-phosphate reductase (352 aa).

Residue Cys155 is part of the active site.

This sequence belongs to the NAGSA dehydrogenase family. Type 1 subfamily.

It localises to the cytoplasm. The catalysed reaction is N-acetyl-L-glutamate 5-semialdehyde + phosphate + NADP(+) = N-acetyl-L-glutamyl 5-phosphate + NADPH + H(+). The protein operates within amino-acid biosynthesis; L-arginine biosynthesis; N(2)-acetyl-L-ornithine from L-glutamate: step 3/4. Functionally, catalyzes the NADPH-dependent reduction of N-acetyl-5-glutamyl phosphate to yield N-acetyl-L-glutamate 5-semialdehyde. This Acaryochloris marina (strain MBIC 11017) protein is N-acetyl-gamma-glutamyl-phosphate reductase.